A 122-amino-acid chain; its full sequence is Large ribosomal subunit protein uL14 (122 aa).

The protein belongs to the universal ribosomal protein uL14 family. In terms of assembly, part of the 50S ribosomal subunit. Forms a cluster with proteins L3 and L19. In the 70S ribosome, L14 and L19 interact and together make contacts with the 16S rRNA in bridges B5 and B8.

Its function is as follows. Binds to 23S rRNA. Forms part of two intersubunit bridges in the 70S ribosome. In Nitrosomonas europaea (strain ATCC 19718 / CIP 103999 / KCTC 2705 / NBRC 14298), this protein is Large ribosomal subunit protein uL14.